The following is a 391-amino-acid chain: Decapping nuclease RAI1 (391 aa).

E174 contacts a divalent metal cation. E223 contacts substrate. A divalent metal cation-binding residues include D225, E244, and L245. Residues K246 and Q270 each coordinate substrate.

Belongs to the DXO/Dom3Z family. Interacts with RAT1; the interaction is direct, stabilizes RAT1 protein structure and stimulates its exoribonuclease activity. The interaction also stimulates RAI1 pyrophosphohydrolase activity, probably by recruiting it to mRNA substrates. The cofactor is a divalent metal cation.

The protein resides in the nucleus. It carries out the reaction a 5'-end NAD(+)-phospho-ribonucleoside in mRNA + H2O = a 5'-end phospho-ribonucleoside in mRNA + NAD(+) + H(+). The enzyme catalyses a 5'-end (N(7)-methyl 5'-triphosphoguanosine)-ribonucleoside-ribonucleotide in mRNA + H2O = a (N(7)-methyl 5'-triphosphoguanosine)-nucleoside + a 5'-end phospho-ribonucleoside in mRNA + H(+). It catalyses the reaction a 5'-end triphospho-ribonucleoside in mRNA + H2O = a 5'-end phospho-ribonucleoside in mRNA + diphosphate + H(+). In terms of biological role, decapping enzyme for NAD-capped RNAs: specifically hydrolyzes the nicotinamide adenine dinucleotide (NAD) cap from a subset of RNAs by removing the entire NAD moiety from the 5'-end of an NAD-capped RNA. The NAD-cap is present at the 5'-end of some RNAs and snoRNAs. In contrast to the canonical 5'-end N7 methylguanosine (m7G) cap, the NAD cap promotes mRNA decay. Also acts as a non-canonical decapping enzyme that removes the entire cap structure of m7G capped or incompletely capped RNAs. Has decapping activity toward incomplete 5'-end m7G cap mRNAs such as unmethylated 5'-end-capped RNA (cap0), while it has no activity toward 2'-O-ribose methylated m7G cap (cap1). Also possesses RNA 5'-pyrophosphohydrolase activity by hydrolyzing the 5'-end triphosphate to release pyrophosphates. Stimulates exoribonuclease activity of Rat1, allowing it to degrade RNAs with stable secondary structure more effectively. This is Decapping nuclease RAI1 from Candida albicans (strain SC5314 / ATCC MYA-2876) (Yeast).